Reading from the N-terminus, the 440-residue chain is Chromosomal replication initiator protein DnaA (440 aa).

The domain I, interacts with DnaA modulators stretch occupies residues 1 to 74; it reads MNPSQILENL…VQSGNKAIIN (74 aa). Positions 74 to 99 are domain II; the sequence is NIQAQSTKQSNKSTKIDIAHIQAQST. Residues 100–316 are domain III, AAA+ region; the sequence is ILNPSFTFES…GIIISLNAYA (217 aa). ATP-binding residues include Gly146, Gly148, Lys149, and Thr150. The segment at 317–440 is domain IV, binds dsDNA; it reads TILGQEITLE…KNKILIKSQS (124 aa).

This sequence belongs to the DnaA family. In terms of assembly, oligomerizes as a right-handed, spiral filament on DNA at oriC.

The protein localises to the cytoplasm. Functionally, plays an essential role in the initiation and regulation of chromosomal replication. ATP-DnaA binds to the origin of replication (oriC) to initiate formation of the DNA replication initiation complex once per cell cycle. Binds the DnaA box (a 9 base pair repeat at the origin) and separates the double-stranded (ds)DNA. Forms a right-handed helical filament on oriC DNA; dsDNA binds to the exterior of the filament while single-stranded (ss)DNA is stabiized in the filament's interior. The ATP-DnaA-oriC complex binds and stabilizes one strand of the AT-rich DNA unwinding element (DUE), permitting loading of DNA polymerase. After initiation quickly degrades to an ADP-DnaA complex that is not apt for DNA replication. Binds acidic phospholipids. In Campylobacter jejuni subsp. doylei (strain ATCC BAA-1458 / RM4099 / 269.97), this protein is Chromosomal replication initiator protein DnaA.